The following is a 641-amino-acid chain: Fructose-1,6-bisphosphatase class 3 (641 aa).

Belongs to the FBPase class 3 family. It depends on Mn(2+) as a cofactor.

It catalyses the reaction beta-D-fructose 1,6-bisphosphate + H2O = beta-D-fructose 6-phosphate + phosphate. It functions in the pathway carbohydrate biosynthesis; gluconeogenesis. This chain is Fructose-1,6-bisphosphatase class 3, found in Ligilactobacillus salivarius (strain UCC118) (Lactobacillus salivarius).